Consider the following 930-residue polypeptide: Isoleucine--tRNA ligase (930 aa).

The 'HIGH' region signature appears at 57 to 67 (PYANGNIHVGH). Position 554 (Glu554) interacts with L-isoleucyl-5'-AMP. The short motif at 595–599 (KMSKS) is the 'KMSKS' region element. Lys598 is a binding site for ATP. The Zn(2+) site is built by Cys888, Cys891, Cys908, and Cys911.

This sequence belongs to the class-I aminoacyl-tRNA synthetase family. IleS type 1 subfamily. Monomer. Requires Zn(2+) as cofactor.

The protein localises to the cytoplasm. It catalyses the reaction tRNA(Ile) + L-isoleucine + ATP = L-isoleucyl-tRNA(Ile) + AMP + diphosphate. In terms of biological role, catalyzes the attachment of isoleucine to tRNA(Ile). As IleRS can inadvertently accommodate and process structurally similar amino acids such as valine, to avoid such errors it has two additional distinct tRNA(Ile)-dependent editing activities. One activity is designated as 'pretransfer' editing and involves the hydrolysis of activated Val-AMP. The other activity is designated 'posttransfer' editing and involves deacylation of mischarged Val-tRNA(Ile). The polypeptide is Isoleucine--tRNA ligase (Streptococcus pneumoniae (strain ATCC BAA-255 / R6)).